Consider the following 542-residue polypeptide: MVSLLRCPSSKPYSSLICSLTLGAVVALSGVAYAEETKPAETVPVVTPPKVISQPATKNQVRFTKTGAFDSDTVVKIAKRLAAKPYVALKDPLPAGLAKLSYDEYRDIRFNPTASIWRDQGVPFQMQMFHRGFYFQDLIEIAIVEGQNATHLAYEPKYFTAGEVITQALPNDDIGYSGFRIHNQLNTNGVFDELMVFQGASYFRALGKGNAYGLSSRGLALKTADAEGEEFPIFRAFWVERPYNDSNLIVVHALLDSPSVAGAYTFSVRPGDNTLIDVEATLFPRVELSKVGLAPSTSMFLHSLNGRHDTDDFRPEVHDSDGLLMLNGRGEHLWRPLANPRQLQVSAFSDNSPQGFGLIQRERDYASYQDLEAHYERRPSLWIEPVGNWGQGSVVLTEIPTESEIHDNIVSYWKPRQPIPAGSEFHFAYRMSWGEEPAAKVGAVHVSRSASGRADIAKATPRRLFVVDYQIEGPMTDEMPVAKVEASGGVVTNVVIARNAAKNGYRLAFELEPEDKELIELRAELKFPTPRQVETWLYRWTL.

The N-terminal stretch at 1–34 (MVSLLRCPSSKPYSSLICSLTLGAVVALSGVAYA) is a signal peptide.

It belongs to the OpgD/OpgG family.

The protein localises to the periplasm. Its pathway is glycan metabolism; osmoregulated periplasmic glucan (OPG) biosynthesis. Its function is as follows. Involved in the biosynthesis of osmoregulated periplasmic glucans (OPGs). In Shewanella baltica (strain OS223), this protein is Glucans biosynthesis protein G.